We begin with the raw amino-acid sequence, 191 residues long: Cytochrome c biogenesis ATP-binding export protein CcmA (191 aa).

The region spanning 6-189 (LVATDIACRR…RVRTLAIRNF (184 aa)) is the ABC transporter domain. 38-45 (GANGIGKS) contributes to the ATP binding site.

Belongs to the ABC transporter superfamily. CcmA exporter (TC 3.A.1.107) family. As to quaternary structure, the complex is composed of two ATP-binding proteins (CcmA) and two transmembrane proteins (CcmB).

It is found in the cell inner membrane. The catalysed reaction is heme b(in) + ATP + H2O = heme b(out) + ADP + phosphate + H(+). Its function is as follows. Part of the ABC transporter complex CcmAB involved in the biogenesis of c-type cytochromes; once thought to export heme, this seems not to be the case, but its exact role is uncertain. Responsible for energy coupling to the transport system. This chain is Cytochrome c biogenesis ATP-binding export protein CcmA, found in Novosphingobium aromaticivorans (strain ATCC 700278 / DSM 12444 / CCUG 56034 / CIP 105152 / NBRC 16084 / F199).